We begin with the raw amino-acid sequence, 186 residues long: Adenylate kinase (186 aa).

10–15 (GVGKGT) is a binding site for ATP. The interval 30-59 (STGDIFRYNIKNKTELGLEAMSYTDKGELV) is NMP. Residues Thr-31, Arg-36, 57–59 (ELV), 85–88 (GYPR), and Gln-92 each bind AMP. The interval 126–136 (KRAAEQGRADD) is LID. Arg-127 contacts ATP. Arg-133 and Arg-144 together coordinate AMP. Gly-172 is an ATP binding site.

It belongs to the adenylate kinase family. In terms of assembly, monomer.

The protein localises to the cytoplasm. It catalyses the reaction AMP + ATP = 2 ADP. It participates in purine metabolism; AMP biosynthesis via salvage pathway; AMP from ADP: step 1/1. Catalyzes the reversible transfer of the terminal phosphate group between ATP and AMP. Plays an important role in cellular energy homeostasis and in adenine nucleotide metabolism. The protein is Adenylate kinase of Bifidobacterium longum (strain NCC 2705).